The following is a 555-amino-acid chain: Dihydroxy-acid dehydratase (555 aa).

Asp-78 lines the Mg(2+) pocket. Cys-119 contributes to the [2Fe-2S] cluster binding site. 2 residues coordinate Mg(2+): Asp-120 and Lys-121. The residue at position 121 (Lys-121) is an N6-carboxylysine. Cys-192 is a [2Fe-2S] cluster binding site. Residue Glu-444 coordinates Mg(2+). Ser-470 functions as the Proton acceptor in the catalytic mechanism.

The protein belongs to the IlvD/Edd family. Homodimer. It depends on [2Fe-2S] cluster as a cofactor. The cofactor is Mg(2+).

The catalysed reaction is (2R)-2,3-dihydroxy-3-methylbutanoate = 3-methyl-2-oxobutanoate + H2O. The enzyme catalyses (2R,3R)-2,3-dihydroxy-3-methylpentanoate = (S)-3-methyl-2-oxopentanoate + H2O. It functions in the pathway amino-acid biosynthesis; L-isoleucine biosynthesis; L-isoleucine from 2-oxobutanoate: step 3/4. The protein operates within amino-acid biosynthesis; L-valine biosynthesis; L-valine from pyruvate: step 3/4. Its function is as follows. Functions in the biosynthesis of branched-chain amino acids. Catalyzes the dehydration of (2R,3R)-2,3-dihydroxy-3-methylpentanoate (2,3-dihydroxy-3-methylvalerate) into 2-oxo-3-methylpentanoate (2-oxo-3-methylvalerate) and of (2R)-2,3-dihydroxy-3-methylbutanoate (2,3-dihydroxyisovalerate) into 2-oxo-3-methylbutanoate (2-oxoisovalerate), the penultimate precursor to L-isoleucine and L-valine, respectively. In Halalkalibacterium halodurans (strain ATCC BAA-125 / DSM 18197 / FERM 7344 / JCM 9153 / C-125) (Bacillus halodurans), this protein is Dihydroxy-acid dehydratase.